A 145-amino-acid chain; its full sequence is Putative pre-16S rRNA nuclease (145 aa).

Belongs to the YqgF nuclease family.

The protein localises to the cytoplasm. In terms of biological role, could be a nuclease involved in processing of the 5'-end of pre-16S rRNA. The protein is Putative pre-16S rRNA nuclease of Tropheryma whipplei (strain Twist) (Whipple's bacillus).